A 268-amino-acid chain; its full sequence is MSSKVHLGHTARKRFGQNFLTDDNVINRIVGAIAPDNDHVMVEIGPGLGALTEPVATAIDNLTVVELDRDLVERLQNHPVLKDKLTIHQGDALQFDFSQLVVPGKKLKVFGNLPYNISTPLMFHLFEFAEQIETMHFMLQKEVVLRLSASPGNKAYGRLTVMAQYFCQVVPVLEVPPHSFAPPPKVDSAVVRLLPYAEKPFPCKDVNVLRQLCTTAFNMRRKTLRNNLKQVLSDEEFEQLGIDPNLRPEQISVEQYVAMANMVCDKQA.

S-adenosyl-L-methionine-binding residues include Asn-18, Leu-20, Gly-45, Glu-66, Asp-91, and Asn-112.

Belongs to the class I-like SAM-binding methyltransferase superfamily. rRNA adenine N(6)-methyltransferase family. RsmA subfamily.

It is found in the cytoplasm. The enzyme catalyses adenosine(1518)/adenosine(1519) in 16S rRNA + 4 S-adenosyl-L-methionine = N(6)-dimethyladenosine(1518)/N(6)-dimethyladenosine(1519) in 16S rRNA + 4 S-adenosyl-L-homocysteine + 4 H(+). Functionally, specifically dimethylates two adjacent adenosines (A1518 and A1519) in the loop of a conserved hairpin near the 3'-end of 16S rRNA in the 30S particle. May play a critical role in biogenesis of 30S subunits. The sequence is that of Ribosomal RNA small subunit methyltransferase A from Shewanella sp. (strain MR-7).